A 352-amino-acid chain; its full sequence is Cell division protein ZipA (352 aa).

The Periplasmic segment spans residues 1–5 (MQELR). The helical transmembrane segment at 6-26 (LVLIIVGALAISALLLHGLWT) threads the bilayer. The Cytoplasmic portion of the chain corresponds to 27–352 (SRKEKPAKFG…REKAKLYSQA (326 aa)). A compositionally biased stretch (basic and acidic residues) spans 35–54 (FGEKPLGKLDDSNRDTEGFD). Residues 35-56 (FGEKPLGKLDDSNRDTEGFDHT) form a disordered region.

It belongs to the ZipA family. As to quaternary structure, interacts with FtsZ via their C-terminal domains.

It localises to the cell inner membrane. In terms of biological role, essential cell division protein that stabilizes the FtsZ protofilaments by cross-linking them and that serves as a cytoplasmic membrane anchor for the Z ring. Also required for the recruitment to the septal ring of downstream cell division proteins. The chain is Cell division protein ZipA from Photobacterium profundum (strain SS9).